A 191-amino-acid chain; its full sequence is Protein YceI (191 aa).

Positions 1–22 are cleaved as a signal peptide; sequence MKKSLLGLTFASLMFSAGSAVA.

This sequence belongs to the UPF0312 family. Type 1 subfamily.

It is found in the periplasm. The chain is Protein YceI from Shigella flexneri.